The following is a 1148-amino-acid chain: Trafficking protein particle complex subunit 9 (1148 aa).

Phosphoserine occurs at positions 566 and 953.

Belongs to the NIBP family. As to quaternary structure, component of the multisubunit TRAPP (transport protein particle) complex, which includes at least TRAPPC2, TRAPPC2L, TRAPPC3, TRAPPC3L, TRAPPC4, TRAPPC5, TRAPPC8, TRAPPC9, TRAPPC10, TRAPPC11 and TRAPPC12. Directly interacts with IKBKB and MAP3K14. In terms of tissue distribution, expressed in neurons of the pyramidal layer of the cortex, in spinal cord motor neurons and white matter neurons (at protein level).

The protein resides in the golgi apparatus. Its subcellular location is the cis-Golgi network. The protein localises to the endoplasmic reticulum. It is found in the cytoplasm. Functionally, functions as an activator of NF-kappa-B through increased phosphorylation of the IKK complex. May function in neuronal cells differentiation. May play a role in vesicular transport from endoplasmic reticulum to Golgi. This chain is Trafficking protein particle complex subunit 9 (Trappc9), found in Mus musculus (Mouse).